The primary structure comprises 482 residues: tRNA sulfurtransferase (482 aa).

Residues 61–165 (QQVLEILTTT…DDKLNQILAH (105 aa)) enclose the THUMP domain. ATP contacts are provided by residues 183–184 (LI), Lys-265, Gly-287, and Gln-296. A disulfide bond links Cys-344 and Cys-456. The Rhodanese domain occupies 404–482 (IEEHAVVLDI…GFNNVKVYRP (79 aa)). Cys-456 functions as the Cysteine persulfide intermediate in the catalytic mechanism.

It belongs to the ThiI family.

The protein localises to the cytoplasm. It carries out the reaction [ThiI sulfur-carrier protein]-S-sulfanyl-L-cysteine + a uridine in tRNA + 2 reduced [2Fe-2S]-[ferredoxin] + ATP + H(+) = [ThiI sulfur-carrier protein]-L-cysteine + a 4-thiouridine in tRNA + 2 oxidized [2Fe-2S]-[ferredoxin] + AMP + diphosphate. It catalyses the reaction [ThiS sulfur-carrier protein]-C-terminal Gly-Gly-AMP + S-sulfanyl-L-cysteinyl-[cysteine desulfurase] + AH2 = [ThiS sulfur-carrier protein]-C-terminal-Gly-aminoethanethioate + L-cysteinyl-[cysteine desulfurase] + A + AMP + 2 H(+). The protein operates within cofactor biosynthesis; thiamine diphosphate biosynthesis. In terms of biological role, catalyzes the ATP-dependent transfer of a sulfur to tRNA to produce 4-thiouridine in position 8 of tRNAs, which functions as a near-UV photosensor. Also catalyzes the transfer of sulfur to the sulfur carrier protein ThiS, forming ThiS-thiocarboxylate. This is a step in the synthesis of thiazole, in the thiamine biosynthesis pathway. The sulfur is donated as persulfide by IscS. The chain is tRNA sulfurtransferase from Vibrio vulnificus (strain YJ016).